Consider the following 231-residue polypeptide: Elongation factor 1-delta 1 (231 aa).

A2 is subject to N-acetylalanine. A GST C-terminal domain is found at 10-73; sequence DAGLKKLDEH…LRISGVSAEG (64 aa). Disordered regions lie at residues 85–108 and 116–135; these read TEEAVATPPAADSKDAAADEEDDD and ETEEEKKAAEERAASVKAST. A compositionally biased stretch (basic and acidic residues) spans 119–129; it reads EEKKAAEERAA.

This sequence belongs to the EF-1-beta/EF-1-delta family. As to quaternary structure, EF-1 is composed of 4 subunits: alpha, beta (1B-alpha=beta'), delta (1B-beta), and gamma (1B-gamma).

Functionally, EF-1-beta and EF-1-delta stimulate the exchange of GDP bound to EF-1-alpha to GTP. The chain is Elongation factor 1-delta 1 from Arabidopsis thaliana (Mouse-ear cress).